The following is a 434-amino-acid chain: 3-phosphoshikimate 1-carboxyvinyltransferase (434 aa).

3-phosphoshikimate-binding residues include lysine 15, serine 16, and arginine 20. Lysine 15 contributes to the phosphoenolpyruvate binding site. Residues glycine 96 and arginine 124 each contribute to the phosphoenolpyruvate site. 5 residues coordinate 3-phosphoshikimate: serine 169, glutamine 171, serine 195, aspartate 319, and lysine 346. A phosphoenolpyruvate-binding site is contributed by glutamine 171. Aspartate 319 serves as the catalytic Proton acceptor. 2 residues coordinate phosphoenolpyruvate: arginine 350 and arginine 394.

It belongs to the EPSP synthase family. Monomer.

It localises to the cytoplasm. The catalysed reaction is 3-phosphoshikimate + phosphoenolpyruvate = 5-O-(1-carboxyvinyl)-3-phosphoshikimate + phosphate. It participates in metabolic intermediate biosynthesis; chorismate biosynthesis; chorismate from D-erythrose 4-phosphate and phosphoenolpyruvate: step 6/7. In terms of biological role, catalyzes the transfer of the enolpyruvyl moiety of phosphoenolpyruvate (PEP) to the 5-hydroxyl of shikimate-3-phosphate (S3P) to produce enolpyruvyl shikimate-3-phosphate and inorganic phosphate. This Chlorobaculum tepidum (strain ATCC 49652 / DSM 12025 / NBRC 103806 / TLS) (Chlorobium tepidum) protein is 3-phosphoshikimate 1-carboxyvinyltransferase.